The chain runs to 256 residues: UPF0246 protein PG_1544 (256 aa).

The protein belongs to the UPF0246 family.

This is UPF0246 protein PG_1544 from Porphyromonas gingivalis (strain ATCC BAA-308 / W83).